The following is a 115-amino-acid chain: Guanylin (115 aa).

The signal sequence occupies residues 1 to 23 (MNAWLLSVLCLLGALAVLVEGVT). Residues 24-100 (VQDGDLSFPL…LQRLEAIAQD (77 aa)) constitute a propeptide that is removed on maturation. 3 disulfides stabilise this stretch: Cys69–Cys82, Cys104–Cys112, and Cys107–Cys115.

This sequence belongs to the guanylin family. Intestine and in low abundance in adrenal gland, kidney, and uterus/oviduct.

It is found in the secreted. In terms of biological role, endogenous activator of intestinal guanylate cyclase. It stimulates this enzyme through the same receptor binding region as the heat-stable enterotoxins. The sequence is that of Guanylin (Guca2a) from Rattus norvegicus (Rat).